The primary structure comprises 481 residues: uncharacterized protein (481 aa).

Helical transmembrane passes span 30-50 (TIII…FVQF), 96-116 (AIAL…FIGM), 154-174 (CMAV…FNSV), 196-216 (ISLV…IAII), 220-240 (LVPM…GMHI), 250-270 (IVQS…ALVS), 311-331 (MLGV…IILL), 354-374 (IGEF…YSSI), 391-411 (KPWL…FGAV), and 424-444 (VMAV…PIVW).

This sequence belongs to the alanine or glycine:cation symporter (AGCS) (TC 2.A.25) family.

The protein localises to the cell inner membrane. This is an uncharacterized protein from Haemophilus influenzae (strain ATCC 51907 / DSM 11121 / KW20 / Rd).